The primary structure comprises 231 residues: 5'-methylthioadenosine/S-adenosylhomocysteine nucleosidase (231 aa).

Catalysis depends on glutamate 12, which acts as the Proton acceptor. Substrate contacts are provided by residues glycine 78, methionine 153, and 174-175 (ME). Aspartate 198 acts as the Proton donor in catalysis.

Belongs to the PNP/UDP phosphorylase family. MtnN subfamily.

It carries out the reaction S-adenosyl-L-homocysteine + H2O = S-(5-deoxy-D-ribos-5-yl)-L-homocysteine + adenine. The catalysed reaction is S-methyl-5'-thioadenosine + H2O = 5-(methylsulfanyl)-D-ribose + adenine. The enzyme catalyses 5'-deoxyadenosine + H2O = 5-deoxy-D-ribose + adenine. It functions in the pathway amino-acid biosynthesis; L-methionine biosynthesis via salvage pathway; S-methyl-5-thio-alpha-D-ribose 1-phosphate from S-methyl-5'-thioadenosine (hydrolase route): step 1/2. In terms of biological role, catalyzes the irreversible cleavage of the glycosidic bond in both 5'-methylthioadenosine (MTA) and S-adenosylhomocysteine (SAH/AdoHcy) to adenine and the corresponding thioribose, 5'-methylthioribose and S-ribosylhomocysteine, respectively. Also cleaves 5'-deoxyadenosine, a toxic by-product of radical S-adenosylmethionine (SAM) enzymes, into 5-deoxyribose and adenine. The polypeptide is 5'-methylthioadenosine/S-adenosylhomocysteine nucleosidase (Bacillus cereus (strain B4264)).